A 259-amino-acid chain; its full sequence is tRNA pseudouridine synthase A (259 aa).

Asp52 (nucleophile) is an active-site residue. Tyr110 lines the substrate pocket.

This sequence belongs to the tRNA pseudouridine synthase TruA family. As to quaternary structure, homodimer.

It catalyses the reaction uridine(38/39/40) in tRNA = pseudouridine(38/39/40) in tRNA. Functionally, formation of pseudouridine at positions 38, 39 and 40 in the anticodon stem and loop of transfer RNAs. The chain is tRNA pseudouridine synthase A from Coprothermobacter proteolyticus (strain ATCC 35245 / DSM 5265 / OCM 4 / BT).